Consider the following 198-residue polypeptide: Small ribosomal subunit protein eS1 (198 aa).

The protein belongs to the eukaryotic ribosomal protein eS1 family.

This chain is Small ribosomal subunit protein eS1, found in Methanosphaerula palustris (strain ATCC BAA-1556 / DSM 19958 / E1-9c).